The following is a 1017-amino-acid chain: Dopamine dehydroxylase (1017 aa).

A signal peptide (tat-type signal) is located at residues 1-34 (MGNLTMSRRTFVKTAAITGAAAAAFGASTHTALA). One can recognise a 4Fe-4S Mo/W bis-MGD-type domain in the interval 45 to 103 (DTVAVKTCCRGCGKMECGVKVIVQNGRAIRVEGDEGAFQSMGNCCTKSQSSIQAAYHPD). [4Fe-4S] cluster-binding residues include cysteine 53, cysteine 56, cysteine 61, and cysteine 89. The active-site Electron donor/acceptor is lysine 91.

It belongs to the prokaryotic molybdopterin-containing oxidoreductase family. [4Fe-4S] cluster serves as cofactor. It depends on Mo-bis(molybdopterin guanine dinucleotide) as a cofactor. Post-translationally, predicted to be exported by the Tat system. The position of the signal peptide cleavage has not been experimentally proven.

It carries out the reaction dopamine + AH2 = 3-tyramine + A + H2O. Functionally, involved in drug metabolism, as part of an interspecies gut bacterial pathway for Levodopa (L-dopa) metabolism, acting on dopamine produced by Enterecoccus L-dopa decarboxylase. Removes the para hydroxyl group of dopamine to produce m-tyramine (3-tyramine). It is possible that dopamine dehydroxylation influences the multiple side effects of L-dopa administration linked to dopamine production in the treatment of Parkinson's disease. This chain is Dopamine dehydroxylase, found in Eggerthella lenta (Eubacterium lentum).